Reading from the N-terminus, the 316-residue chain is DNA-directed RNA polymerase subunit alpha (316 aa).

Residues 1–229 (MLEMEKPRID…EYLKLFTEID (229 aa)) form an alpha N-terminal domain (alpha-NTD) region. The interval 246–316 (KDKILEMSIE…LNLSFRKSED (71 aa)) is alpha C-terminal domain (alpha-CTD).

This sequence belongs to the RNA polymerase alpha chain family. As to quaternary structure, homodimer. The RNAP catalytic core consists of 2 alpha, 1 beta, 1 beta' and 1 omega subunit. When a sigma factor is associated with the core the holoenzyme is formed, which can initiate transcription.

It carries out the reaction RNA(n) + a ribonucleoside 5'-triphosphate = RNA(n+1) + diphosphate. In terms of biological role, DNA-dependent RNA polymerase catalyzes the transcription of DNA into RNA using the four ribonucleoside triphosphates as substrates. The sequence is that of DNA-directed RNA polymerase subunit alpha from Syntrophomonas wolfei subsp. wolfei (strain DSM 2245B / Goettingen).